The primary structure comprises 565 residues: Proline--tRNA ligase (565 aa).

This sequence belongs to the class-II aminoacyl-tRNA synthetase family. ProS type 1 subfamily. As to quaternary structure, homodimer.

The protein resides in the cytoplasm. It carries out the reaction tRNA(Pro) + L-proline + ATP = L-prolyl-tRNA(Pro) + AMP + diphosphate. Catalyzes the attachment of proline to tRNA(Pro) in a two-step reaction: proline is first activated by ATP to form Pro-AMP and then transferred to the acceptor end of tRNA(Pro). As ProRS can inadvertently accommodate and process non-cognate amino acids such as alanine and cysteine, to avoid such errors it has two additional distinct editing activities against alanine. One activity is designated as 'pretransfer' editing and involves the tRNA(Pro)-independent hydrolysis of activated Ala-AMP. The other activity is designated 'posttransfer' editing and involves deacylation of mischarged Ala-tRNA(Pro). The misacylated Cys-tRNA(Pro) is not edited by ProRS. In Lactobacillus delbrueckii subsp. bulgaricus (strain ATCC 11842 / DSM 20081 / BCRC 10696 / JCM 1002 / NBRC 13953 / NCIMB 11778 / NCTC 12712 / WDCM 00102 / Lb 14), this protein is Proline--tRNA ligase.